A 148-amino-acid chain; its full sequence is D-aminoacyl-tRNA deacylase (148 aa).

A Gly-cisPro motif, important for rejection of L-amino acids motif is present at residues 137 to 138 (GP).

The protein belongs to the DTD family. In terms of assembly, homodimer.

The protein resides in the cytoplasm. The enzyme catalyses glycyl-tRNA(Ala) + H2O = tRNA(Ala) + glycine + H(+). It carries out the reaction a D-aminoacyl-tRNA + H2O = a tRNA + a D-alpha-amino acid + H(+). Its function is as follows. An aminoacyl-tRNA editing enzyme that deacylates mischarged D-aminoacyl-tRNAs. Also deacylates mischarged glycyl-tRNA(Ala), protecting cells against glycine mischarging by AlaRS. Acts via tRNA-based rather than protein-based catalysis; rejects L-amino acids rather than detecting D-amino acids in the active site. By recycling D-aminoacyl-tRNA to D-amino acids and free tRNA molecules, this enzyme counteracts the toxicity associated with the formation of D-aminoacyl-tRNA entities in vivo and helps enforce protein L-homochirality. This is D-aminoacyl-tRNA deacylase from Finegoldia magna (strain ATCC 29328 / DSM 20472 / WAL 2508) (Peptostreptococcus magnus).